Here is a 331-residue protein sequence, read N- to C-terminus: Probable transaldolase (331 aa).

Lysine 142 functions as the Schiff-base intermediate with substrate in the catalytic mechanism.

This sequence belongs to the transaldolase family. Type 1 subfamily. Homodimer.

The protein localises to the cytoplasm. The catalysed reaction is D-sedoheptulose 7-phosphate + D-glyceraldehyde 3-phosphate = D-erythrose 4-phosphate + beta-D-fructose 6-phosphate. Its pathway is carbohydrate degradation; pentose phosphate pathway; D-glyceraldehyde 3-phosphate and beta-D-fructose 6-phosphate from D-ribose 5-phosphate and D-xylulose 5-phosphate (non-oxidative stage): step 2/3. Functionally, transaldolase is important for the balance of metabolites in the pentose-phosphate pathway. The polypeptide is Probable transaldolase (Drosophila melanogaster (Fruit fly)).